A 110-amino-acid polypeptide reads, in one-letter code: UPF0339 protein YegP (110 aa).

2 tandem repeats follow at residues 10–58 and 61–109.

The protein belongs to the UPF0339 family. Duplicated subfamily.

In Escherichia coli (strain K12), this protein is UPF0339 protein YegP (yegP).